Here is a 317-residue protein sequence, read N- to C-terminus: Putative carboxypeptidase RP402 (317 aa).

The Nucleophile role is filled by serine 125. Residues glutamate 225 and histidine 288 each act as charge relay system in the active site.

The protein belongs to the peptidase S66 family.

This Rickettsia prowazekii (strain Madrid E) protein is Putative carboxypeptidase RP402.